Reading from the N-terminus, the 505-residue chain is Protein amnionless (505 aa).

Positions 1–20 are cleaved as a signal peptide; the sequence is MGLHWQWLIWALVGLHVALA. Residues 21 to 344 are Extracellular-facing; sequence TKWYGGGMDF…RPYNPNVSFS (324 aa). The helical transmembrane segment at 345–365 threads the bilayer; it reads SIVLILFCMALVGLVSVVILA. Topologically, residues 366 to 505 are cytoplasmic; that stretch reads HFMPENPYLN…CEADTDEETI (140 aa). Residues 451–482 are disordered; sequence GALEEAAKESQEQDEILSVPKMETGDLDARSV. Positions 473 to 482 are enriched in basic and acidic residues; that stretch reads ETGDLDARSV.

In terms of tissue distribution, specifically expressed in nephrocytes.

It localises to the cell membrane. Required in the nephrocyte for normal uptake of proteins and elimination of toxins, and for maintenance of endocytic trafficking structures. May function together with Cubn. The sequence is that of Protein amnionless from Drosophila melanogaster (Fruit fly).